A 194-amino-acid chain; its full sequence is Small ribosomal subunit protein uS7 (194 aa).

It belongs to the universal ribosomal protein uS7 family. Part of the 30S ribosomal subunit.

In terms of biological role, one of the primary rRNA binding proteins, it binds directly to 16S rRNA where it nucleates assembly of the head domain of the 30S subunit. Is located at the subunit interface close to the decoding center. This is Small ribosomal subunit protein uS7 from Methanococcus vannielii (strain ATCC 35089 / DSM 1224 / JCM 13029 / OCM 148 / SB).